The sequence spans 385 residues: G2/mitotic-specific cyclin-B3 (385 aa).

Over residues 1–16 the composition is skewed to polar residues; sequence MMLRSQAKNVDLTSQA. 2 disordered regions span residues 1–48 and 63–88; these read MMLR…HSKG and SAKR…QKSR. Basic and acidic residues-rich tracts occupy residues 17–28 and 63–80; these read DSRHQQKRKQAE and SAKR…RDVE.

Belongs to the cyclin family. Cyclin AB subfamily.

The protein localises to the nucleus. In terms of biological role, could be involved at the G2/M (mitosis) transition. Interacts with the CDK1 and CDK2 protein kinases. G2/M cyclins accumulate steadily during G2 and are abruptly destroyed at mitosis. Plays a role during oocyte meiosis II. The protein is G2/mitotic-specific cyclin-B3 (cyb-3) of Caenorhabditis elegans.